We begin with the raw amino-acid sequence, 878 residues long: MQESLVLEMLQTGKTATWPANSGTQDGEGFVDKEVKGVPSTDRTKRMKERFMNAKCKMDMEAPIAYTKAWRMYEGKPLYVRRGLSYKYMLEHLTPVIRPDELITMSKTRYDRGATQVPQFATDFMISFLTQAEDQKDEAKLFSVEGKDEAHTVDEEGWTPVGQLFSIREEEVKPMLEVLEYWKTRCVENVSDEWMKTSFPMYQDYINAKKVGLFPGSGLHAGCDGRWIPAYDVVLGGLNKVIDECKKNIAKTVVTTKDVADKVFFWQGCIYACEGAIAWANNYAKEARRLAEITPEPRKTELLQMAERLERVPAEPPRNFMEAVQALWTAQILIISDSLALGVSPGRWGKLLEPYYEKDLADGVITKEQALEVMEMLRIKFSTEEYITPSLWAAMASSNSFMNLAVGGLDPKTGQCTDNELEDLILQAGINMPTPQPTLSMLLSNKTSDHLALKAAECTKAGNGYPAWFNYDMMVEHNLWCYADEGITMEDARNCALSGCVENGLAGTGHPIAHPAFYNEGKTIELALHEGVDPRTGIKVMDGIKPVESYEDVWNNFVKIREHFMRVYMRYWNEVVACQRDIHPKIMGSIFMHDCVENGRPVDNLGCRYNGSVTLLDSGTVNVVNGLAAMKKLIWEDHKYTYAEFKEAMDNNFGFVLGAEKGNFSMLNQEIDPEKHMKYAQIHRDILNCPKFGNDDDFVDDIFVKVWQDYDRVTGSETTYNGYRWITAALSISAHGPHGRVTGATPDGRLAGVTLCDGILSASPGTDVNGPIALIRSGVKLDPTTFASVQLNMKFHPSAIRGEEGSKNFVDFIRSYFNMGGYHVQFNIVDSKMLRDAQDKPQNYRDLMVRVAGFSAYWNELGKPIQDEVIARTEYDAL.

The region spanning 42 to 750 (DRTKRMKERF…VTGATPDGRL (709 aa)) is the PFL domain. C500 acts as the Cysteine radical intermediate in catalysis. The active-site Proton acceptor is the E502. Positions 758 to 878 (GILSASPGTD…VIARTEYDAL (121 aa)) constitute a Glycine radical domain. Position 853 is a glycine radical (G853).

This sequence belongs to the glycyl radical enzyme (GRE) family. Homodimer (predominantly) and monomer. Requires the activating protein OsIADAE to generate the key active site glycyl radical on Gly-853 that is involved in catalysis.

The catalysed reaction is (indol-3-yl)acetate + H(+) = skatole + CO2. It functions in the pathway amino-acid degradation. Glycyl radical enzyme that catalyzes the terminal step of tryptophan fermentation, the decarboxylation of indoleacetate to form skatole, a malodorous compound that contributes to the characteristic smell of animal feces. No activity is detected with phenylacetate or p-hydroxyphenylacetate as substrates, indicating high substrate specificity. The polypeptide is Indoleacetate decarboxylase (Tractidigestivibacter scatoligenes (Olsenella scatoligenes)).